We begin with the raw amino-acid sequence, 295 residues long: 2-dehydropantoate 2-reductase (295 aa).

NADP(+) contacts are provided by residues 9-14 (GPGAVG), asparagine 100, and alanine 126. Residue asparagine 100 participates in substrate binding. Residue lysine 177 is the Proton donor of the active site. Asparagine 181 and serine 246 together coordinate substrate. An NADP(+)-binding site is contributed by glutamate 258.

This sequence belongs to the ketopantoate reductase family.

It localises to the cytoplasm. The enzyme catalyses (R)-pantoate + NADP(+) = 2-dehydropantoate + NADPH + H(+). Its pathway is cofactor biosynthesis; (R)-pantothenate biosynthesis; (R)-pantoate from 3-methyl-2-oxobutanoate: step 2/2. Functionally, catalyzes the NADPH-dependent reduction of ketopantoate into pantoic acid. This Mycobacterium tuberculosis (strain CDC 1551 / Oshkosh) protein is 2-dehydropantoate 2-reductase.